Here is a 138-residue protein sequence, read N- to C-terminus: Gap junction alpha-4 protein (138 aa).

Over 1 to 16 the chain is Cytoplasmic; sequence DWGFLEKLLDQVQEHS. A helical membrane pass occupies residues 17–39; the sequence is TVVGKIWLTVLFIFRILILGLAG. Residues 40-74 lie on the Extracellular side of the membrane; that stretch reads ESVWGDEQSDFECNTAQPGCTNVCYDQAFPISHIP. A helical membrane pass occupies residues 75–97; sequence YWVLQFLFVSTPTLVYLGHVIYL. Topologically, residues 98-138 are cytoplasmic; that stretch reads SRREERLRQKEGELRALPDKDPRVERALAGIERQMAKISVA.

It belongs to the connexin family. Alpha-type (group II) subfamily. In terms of assembly, a connexon is composed of a hexamer of connexins.

The protein resides in the cell membrane. The protein localises to the cell junction. It is found in the gap junction. In terms of biological role, one gap junction consists of a cluster of closely packed pairs of transmembrane channels, the connexons, through which materials of low MW diffuse from one cell to a neighboring cell. The chain is Gap junction alpha-4 protein (GJA4) from Sus scrofa (Pig).